We begin with the raw amino-acid sequence, 54 residues long: Putative ankyrin repeat protein RC0701 (54 aa).

The stretch at 17–46 (SGKTPLDWYSDYNATKIVETLIKNGGNVSS) is one ANK repeat.

The polypeptide is Putative ankyrin repeat protein RC0701 (Rickettsia conorii (strain ATCC VR-613 / Malish 7)).